We begin with the raw amino-acid sequence, 890 residues long: Major vault protein (890 aa).

MVP repeat units lie at residues 2 to 56 (SMEE…VPPR), 57 to 111 (HYCM…DITP), 112 to 164 (LQVV…EIIQ), 165 to 217 (ATVI…DVVD), 218 to 272 (AVIL…GVVS), 273 to 323 (VTTL…IQNV), 324 to 379 (YVLS…ERQA), 380 to 457 (IPLD…KTRV), and 458 to 520 (VSYR…LLGP). The interval 425 to 455 (ELLNKGQDPLADRGEKETSKTPKLSTPRNKT) is disordered. Positions 434-444 (LADRGEKETSK) are enriched in basic and acidic residues. A Glycyl lysine isopeptide (Lys-Gly) (interchain with G-Cter in SUMO2) cross-link involves residue Lys-444.

As to quaternary structure, the vault ribonucleoprotein particle is a huge (400 A x 670 A) cage structure of 12.9 MDa. It consists of a dimer of half-vaults, with each half-vault comprising 39 identical major vault protein (MVP) chains, PARP4 and one or more vault RNAs (vRNAs). Interacts with TEP1. Interacts with PTEN and activated MAPK1. The phosphorylated protein interacts with the SH2 domains of PTPN11 and SRC. Interacts with APEX1. May interact with ZNF540. Phosphorylated on Tyr residues after EGF stimulation. Post-translationally, dephosphorylated by PTPN11.

The protein localises to the cytoplasm. Its subcellular location is the nucleus. In terms of biological role, required for normal vault structure. Vaults are multi-subunit structures that may act as scaffolds for proteins involved in signal transduction. Vaults may also play a role in nucleo-cytoplasmic transport. Down-regulates IFNG-mediated STAT1 signaling and subsequent activation of JAK. Down-regulates SRC activity and signaling through MAP kinases. The sequence is that of Major vault protein (MVP) from Bos taurus (Bovine).